Consider the following 456-residue polypeptide: UDP-N-acetylmuramoylalanine--D-glutamate ligase (456 aa).

An ATP-binding site is contributed by 122-128 (GSNGKST).

Belongs to the MurCDEF family.

It is found in the cytoplasm. The catalysed reaction is UDP-N-acetyl-alpha-D-muramoyl-L-alanine + D-glutamate + ATP = UDP-N-acetyl-alpha-D-muramoyl-L-alanyl-D-glutamate + ADP + phosphate + H(+). It participates in cell wall biogenesis; peptidoglycan biosynthesis. Its function is as follows. Cell wall formation. Catalyzes the addition of glutamate to the nucleotide precursor UDP-N-acetylmuramoyl-L-alanine (UMA). This is UDP-N-acetylmuramoylalanine--D-glutamate ligase from Saccharophagus degradans (strain 2-40 / ATCC 43961 / DSM 17024).